A 433-amino-acid chain; its full sequence is Serine hydroxymethyltransferase (433 aa).

(6S)-5,6,7,8-tetrahydrofolate-binding positions include L127 and 131-133; that span reads GHL. At K236 the chain carries N6-(pyridoxal phosphate)lysine.

Belongs to the SHMT family. As to quaternary structure, homodimer. Pyridoxal 5'-phosphate is required as a cofactor.

It is found in the cytoplasm. The enzyme catalyses (6R)-5,10-methylene-5,6,7,8-tetrahydrofolate + glycine + H2O = (6S)-5,6,7,8-tetrahydrofolate + L-serine. Its pathway is one-carbon metabolism; tetrahydrofolate interconversion. It participates in amino-acid biosynthesis; glycine biosynthesis; glycine from L-serine: step 1/1. Catalyzes the reversible interconversion of serine and glycine with tetrahydrofolate (THF) serving as the one-carbon carrier. This reaction serves as the major source of one-carbon groups required for the biosynthesis of purines, thymidylate, methionine, and other important biomolecules. Also exhibits THF-independent aldolase activity toward beta-hydroxyamino acids, producing glycine and aldehydes, via a retro-aldol mechanism. The chain is Serine hydroxymethyltransferase from Corynebacterium urealyticum (strain ATCC 43042 / DSM 7109).